Reading from the N-terminus, the 175-residue chain is Inosine/xanthosine triphosphatase (175 aa).

8-13 (TTNPAK) is a substrate binding site. Mg(2+)-binding residues include Asp-38 and Glu-68. 68–69 (EA) provides a ligand contact to substrate.

It belongs to the YjjX NTPase family. Homodimer. Mg(2+) is required as a cofactor. Mn(2+) serves as cofactor.

It carries out the reaction XTP + H2O = XDP + phosphate + H(+). The catalysed reaction is ITP + H2O = IDP + phosphate + H(+). Its function is as follows. Phosphatase that hydrolyzes non-canonical purine nucleotides such as XTP and ITP to their respective diphosphate derivatives. Probably excludes non-canonical purines from DNA/RNA precursor pool, thus preventing their incorporation into DNA/RNA and avoiding chromosomal lesions. The polypeptide is Inosine/xanthosine triphosphatase (Yersinia enterocolitica serotype O:8 / biotype 1B (strain NCTC 13174 / 8081)).